We begin with the raw amino-acid sequence, 132 residues long: Large-conductance mechanosensitive channel (132 aa).

The next 2 helical transmembrane spans lie at 11–31 and 75–95; these read FISR…GAFG and GSFL…FLLV.

Belongs to the MscL family. In terms of assembly, homopentamer.

It is found in the cell inner membrane. Its function is as follows. Channel that opens in response to stretch forces in the membrane lipid bilayer. May participate in the regulation of osmotic pressure changes within the cell. The sequence is that of Large-conductance mechanosensitive channel from Synechococcus sp. (strain JA-3-3Ab) (Cyanobacteria bacterium Yellowstone A-Prime).